Consider the following 167-residue polypeptide: HTH-type transcriptional repressor IacR (167 aa).

The span at 1–10 (MSNAKNTSAA) shows a compositional bias: polar residues. Positions 1–25 (MSNAKNTSAASPARKGHSHHDPASD) are disordered. Residues 30 to 162 (EDFPFYWLAR…LNRMLEVVFH (133 aa)) form the HTH marR-type domain. The segment at residues 76 to 99 (ISEISTHAIAKLSTITKIVYRMKE) is a DNA-binding region (H-T-H motif).

Exposure to indole-3-acetic acid (IAA) probably relieves the repressor activity. Functionally, probably acts as a repressor of iacA expression. The sequence is that of HTH-type transcriptional repressor IacR from Pseudomonas putida (Arthrobacter siderocapsulatus).